Consider the following 258-residue polypeptide: 5'-nucleotidase SurE (258 aa).

Residues Asp9, Asp10, Ser42, and Asn96 each coordinate a divalent metal cation.

The protein belongs to the SurE nucleotidase family. It depends on a divalent metal cation as a cofactor.

It is found in the cytoplasm. The enzyme catalyses a ribonucleoside 5'-phosphate + H2O = a ribonucleoside + phosphate. Nucleotidase that shows phosphatase activity on nucleoside 5'-monophosphates. The chain is 5'-nucleotidase SurE from Campylobacter jejuni subsp. doylei (strain ATCC BAA-1458 / RM4099 / 269.97).